The following is a 453-amino-acid chain: Ribulose bisphosphate carboxylase large chain (453 aa).

Residues 1 to 2 constitute a propeptide that is removed on maturation; sequence MS. At Pro3 the chain carries N-acetylproline. At Lys14 the chain carries N6,N6,N6-trimethyllysine. Positions 123 and 173 each coordinate substrate. The active-site Proton acceptor is the Lys175. Lys177 lines the substrate pocket. Residues Lys201, Asp203, and Glu204 each coordinate Mg(2+). An N6-carboxylysine modification is found at Lys201. The active-site Proton acceptor is His294. Substrate is bound by residues Arg295, His327, and Ser379.

This sequence belongs to the RuBisCO large chain family. Type I subfamily. Heterohexadecamer of 8 large chains and 8 small chains; disulfide-linked. The disulfide link is formed within the large subunit homodimers. Mg(2+) is required as a cofactor. Post-translationally, the disulfide bond which can form in the large chain dimeric partners within the hexadecamer appears to be associated with oxidative stress and protein turnover.

Its subcellular location is the plastid. It is found in the chloroplast. It carries out the reaction 2 (2R)-3-phosphoglycerate + 2 H(+) = D-ribulose 1,5-bisphosphate + CO2 + H2O. The enzyme catalyses D-ribulose 1,5-bisphosphate + O2 = 2-phosphoglycolate + (2R)-3-phosphoglycerate + 2 H(+). Functionally, ruBisCO catalyzes two reactions: the carboxylation of D-ribulose 1,5-bisphosphate, the primary event in carbon dioxide fixation, as well as the oxidative fragmentation of the pentose substrate in the photorespiration process. Both reactions occur simultaneously and in competition at the same active site. The chain is Ribulose bisphosphate carboxylase large chain from Sherardia arvensis (Blue field-madder).